The primary structure comprises 104 residues: Large ribosomal subunit protein bL21 (104 aa).

Belongs to the bacterial ribosomal protein bL21 family. Part of the 50S ribosomal subunit. Contacts protein L20.

This protein binds to 23S rRNA in the presence of protein L20. In Streptococcus agalactiae serotype Ia (strain ATCC 27591 / A909 / CDC SS700), this protein is Large ribosomal subunit protein bL21.